Consider the following 433-residue polypeptide: tRNA-queuosine alpha-mannosyltransferase (433 aa).

The segment at P194 to G244 is disordered. Over residues A221 to A239 the composition is skewed to polar residues.

This sequence belongs to the glycosyltransferase group 1 family. Glycosyltransferase 4 subfamily.

The protein localises to the cytoplasm. It localises to the nucleus. The enzyme catalyses queuosine(34) in tRNA(Asp) + GDP-alpha-D-mannose = O-4''-alpha-D-mannosylqueuosine(34) in tRNA(Asp) + GDP + H(+). Glycosyltransferase that specifically catalyzes mannosylation of cytoplasmic tRNA(Asp) modified with queuosine at position 34 (queuosine(34)). Mannosylates the cyclopentene moiety of queuosine(34) in tRNA(Asp) to form mannosyl-queuosine(34). Mannosylation of queuosine(34) in tRNA(Asp) is required to slow-down elongation at cognate codons, GAC and GAU, thereby regulating protein translation. The sequence is that of tRNA-queuosine alpha-mannosyltransferase (gtdc1) from Danio rerio (Zebrafish).